A 910-amino-acid polypeptide reads, in one-letter code: DNA repair and recombination protein RAD54B (910 aa).

The segment covering 1–14 (MRRSAAPSQLQGNS) has biased composition (polar residues). The disordered stretch occupies residues 1-33 (MRRSAAPSQLQGNSFKKPKFIPPGRSNPGLNEE). Residue Ser14 is modified to Phosphoserine. Positions 313–480 (GMRMNGRCGA…FALIDFVNPG (168 aa)) constitute a Helicase ATP-binding domain. An ATP-binding site is contributed by 326-333 (DEMGLGKT). Residues 431–434 (DEGH) carry the DEGH box motif. The Helicase C-terminal domain maps to 649–810 (KLLAVIHELR…HIQFSVEELK (162 aa)).

This sequence belongs to the SNF2/RAD54 helicase family. As to quaternary structure, interacts with RAD51 through the NH2-terminal domain. Immunoprecipitation experiments show that the interaction is constitutive and not induced by ionizing radiation. The interaction may be indirect. Abundantly expressed in testis and spleen. Relatively low levels observed in thymus, prostate, ovary and colon.

The protein localises to the nucleus. Its function is as follows. Involved in DNA repair and mitotic recombination. May play an active role in recombination processes in concert with other members of the RAD52 epistasis group. In Homo sapiens (Human), this protein is DNA repair and recombination protein RAD54B (RAD54B).